The sequence spans 206 residues: Dephospho-CoA kinase (206 aa).

A DPCK domain is found at Ile-6 to Lys-206. Ala-14–Thr-19 serves as a coordination point for ATP.

The protein belongs to the CoaE family.

It is found in the cytoplasm. It carries out the reaction 3'-dephospho-CoA + ATP = ADP + CoA + H(+). Its pathway is cofactor biosynthesis; coenzyme A biosynthesis; CoA from (R)-pantothenate: step 5/5. In terms of biological role, catalyzes the phosphorylation of the 3'-hydroxyl group of dephosphocoenzyme A to form coenzyme A. The protein is Dephospho-CoA kinase of Carboxydothermus hydrogenoformans (strain ATCC BAA-161 / DSM 6008 / Z-2901).